The following is a 134-amino-acid chain: MGRDTVAEIITSIRNADMDKKRVVRITSTNITENIVKILLREGFIENARKHRENNKYFLVLTLRHRRNRKGPHRNIFNLKRISRPGLRIYANSQRIPRILGGMGIVIFSTSRGIMTDREARLEGIGGEILCYIW.

It belongs to the universal ribosomal protein uS8 family. Part of the 30S ribosomal subunit.

The protein localises to the plastid. Its subcellular location is the chloroplast. Functionally, one of the primary rRNA binding proteins, it binds directly to 16S rRNA central domain where it helps coordinate assembly of the platform of the 30S subunit. The protein is Small ribosomal subunit protein uS8c (rps8) of Coffea arabica (Arabian coffee).